The sequence spans 419 residues: Serine hydroxymethyltransferase (419 aa).

(6S)-5,6,7,8-tetrahydrofolate is bound by residues L121 and 125 to 127; that span reads GHL. Residue K229 is modified to N6-(pyridoxal phosphate)lysine.

Belongs to the SHMT family. Homodimer. Pyridoxal 5'-phosphate is required as a cofactor.

It localises to the cytoplasm. The catalysed reaction is (6R)-5,10-methylene-5,6,7,8-tetrahydrofolate + glycine + H2O = (6S)-5,6,7,8-tetrahydrofolate + L-serine. The protein operates within one-carbon metabolism; tetrahydrofolate interconversion. Its pathway is amino-acid biosynthesis; glycine biosynthesis; glycine from L-serine: step 1/1. In terms of biological role, catalyzes the reversible interconversion of serine and glycine with tetrahydrofolate (THF) serving as the one-carbon carrier. This reaction serves as the major source of one-carbon groups required for the biosynthesis of purines, thymidylate, methionine, and other important biomolecules. Also exhibits THF-independent aldolase activity toward beta-hydroxyamino acids, producing glycine and aldehydes, via a retro-aldol mechanism. The sequence is that of Serine hydroxymethyltransferase from Histophilus somni (strain 2336) (Haemophilus somnus).